The chain runs to 164 residues: UPF0114 protein Sbal223_3668 (164 aa).

The next 4 membrane-spanning stretches (helical) occupy residues 15–35 (IMAPIYLGLSLVLIGLGIKFF), 53–73 (LVLVTLSLIDITLVGGLIVMV), 108–128 (KVAASIVAISSIHLLKIFMDV), and 136–156 (IMWYLLIHITFVLSAFAMGYL).

Belongs to the UPF0114 family.

Its subcellular location is the cell membrane. The polypeptide is UPF0114 protein Sbal223_3668 (Shewanella baltica (strain OS223)).